Here is a 71-residue protein sequence, read N- to C-terminus: Large ribosomal subunit protein uL29 (71 aa).

A disordered region spans residues 32 to 51 (GVNKSTGGAPSNPGKISETK).

It belongs to the universal ribosomal protein uL29 family.

The protein is Large ribosomal subunit protein uL29 of Methanococcus maripaludis (strain DSM 14266 / JCM 13030 / NBRC 101832 / S2 / LL).